The sequence spans 510 residues: ATP synthase subunit alpha (510 aa).

Position 169-176 (169-176) interacts with ATP; sequence GDRQTGKT.

This sequence belongs to the ATPase alpha/beta chains family. As to quaternary structure, F-type ATPases have 2 components, CF(1) - the catalytic core - and CF(0) - the membrane proton channel. CF(1) has five subunits: alpha(3), beta(3), gamma(1), delta(1), epsilon(1). CF(0) has three main subunits: a(1), b(2) and c(9-12). The alpha and beta chains form an alternating ring which encloses part of the gamma chain. CF(1) is attached to CF(0) by a central stalk formed by the gamma and epsilon chains, while a peripheral stalk is formed by the delta and b chains.

The protein resides in the cell inner membrane. The enzyme catalyses ATP + H2O + 4 H(+)(in) = ADP + phosphate + 5 H(+)(out). Functionally, produces ATP from ADP in the presence of a proton gradient across the membrane. The alpha chain is a regulatory subunit. In Anaeromyxobacter dehalogenans (strain 2CP-1 / ATCC BAA-258), this protein is ATP synthase subunit alpha.